Here is a 193-residue protein sequence, read N- to C-terminus: Acyl carrier protein phosphodiesterase (193 aa).

This sequence belongs to the AcpH family.

It catalyses the reaction holo-[ACP] + H2O = apo-[ACP] + (R)-4'-phosphopantetheine + H(+). Functionally, converts holo-ACP to apo-ACP by hydrolytic cleavage of the phosphopantetheine prosthetic group from ACP. The sequence is that of Acyl carrier protein phosphodiesterase from Escherichia coli O127:H6 (strain E2348/69 / EPEC).